Reading from the N-terminus, the 416-residue chain is Isobutyryl-CoA dehydrogenase, mitochondrial (416 aa).

The N-terminal 21 residues, 1-21 (MISGLFKLSNKQSVLQNATKL), are a transit peptide targeting the mitochondrion. FAD contacts are provided by residues 156–165 (YCLTEPGSGS) and 189–191 (FIS). Position 165 (S165) interacts with substrate. Position 273–276 (273–276 (NGGR)) interacts with substrate. FAD contacts are provided by residues R301, 311–312 (FQ), and 370–374 (QLFGG). E397 acts as the Proton acceptor in catalysis. 399-401 (SDA) contributes to the FAD binding site. R409 lines the substrate pocket.

It belongs to the acyl-CoA dehydrogenase family. Homotetramer. It depends on FAD as a cofactor.

The protein resides in the mitochondrion. It catalyses the reaction 2-methylpropanoyl-CoA + oxidized [electron-transfer flavoprotein] + H(+) = 2-methylpropenoyl-CoA + reduced [electron-transfer flavoprotein]. The enzyme catalyses (2S)-2-methylbutanoyl-CoA + oxidized [electron-transfer flavoprotein] + H(+) = (2E)-2-methylbut-2-enoyl-CoA + reduced [electron-transfer flavoprotein]. It carries out the reaction propanoyl-CoA + oxidized [electron-transfer flavoprotein] + H(+) = acryloyl-CoA + reduced [electron-transfer flavoprotein]. Its pathway is amino-acid degradation; L-valine degradation. Functionally, isobutyryl-CoA dehydrogenase which catalyzes one of the steps of the valine catabolic pathway. To a lesser extent, is also able to catalyze the oxidation of (2S)-2-methylbutanoyl-CoA. The chain is Isobutyryl-CoA dehydrogenase, mitochondrial (acad8) from Dictyostelium discoideum (Social amoeba).